A 1954-amino-acid chain; its full sequence is Protein abnormal spindle (1954 aa).

Positions 134-155 are disordered; it reads VKNPRKFPTVGKTLQLKSPTGA. Residues S151 and S360 each carry the phosphoserine modification. Phosphothreonine is present on T364. Residues S388, S390, S395, S398, S491, S495, S497, S501, S504, and S514 each carry the phosphoserine modification. The tract at residues 476–548 is disordered; it reads KSVKGSPVKN…SSSAHAWPHA (73 aa). Over residues 498 to 507 the composition is skewed to polar residues; it reads DAPSNESLYR. Over residues 528–548 the composition is skewed to low complexity; the sequence is RSAAPANASARSSSAHAWPHA. In terms of domain architecture, Calponin-homology (CH) spans 836 to 968; sequence KETKDILLRF…LLWQLIYKFR (133 aa). 3 consecutive IQ domains span residues 1004 to 1033, 1386 to 1415, and 1467 to 1496; these read RHRA…ERTQ, TQAA…QLRQ, and QREA…KQRQ. Residues 1614–1641 adopt a coiled-coil conformation; it reads RANRSMKQARQEFVQLRTIAVHLQQKFR. IQ domains lie at 1656–1687 and 1690–1721; these read LRCS…MMDL and QKRA…IRKR.

It localises to the cytoplasm. The protein resides in the nucleus. The protein localises to the cytoskeleton. Its subcellular location is the spindle. It is found in the microtubule organizing center. It localises to the perinuclear region. Its function is as follows. Required to maintain the structure of the centrosomal microtubule organizing center (MTOC) during mitosis. May have a preferential role in regulating neurogenesis. Required for germ cell mitosis and oocyte differentiation. The sequence is that of Protein abnormal spindle from Drosophila melanogaster (Fruit fly).